Consider the following 519-residue polypeptide: Cytosol aminopeptidase (519 aa).

Ser42 is subject to Phosphoserine. Residue Lys45 is modified to N6-succinyllysine. Residue Ser54 is modified to Phosphoserine. An N6-succinyllysine mark is found at Lys61 and Lys103. Phosphoserine occurs at positions 180 and 194. The Zn(2+) site is built by Leu202, Met203, and Thr205. The residue at position 221 (Lys221) is an N6-acetyllysine; alternate. Lys221 bears the N6-succinyllysine; alternate mark. Ser238 is subject to Phosphoserine. 2 residues coordinate Zn(2+): Lys282 and Asp287. Substrate is bound by residues Lys282, Asp287, Ser292, and Lys294. A Mg(2+)-binding site is contributed by Asp287. Residue Lys294 is part of the active site. Residues Arg303, Asp305, Asp364, and Glu366 each coordinate Zn(2+). Residues Asp305 and Asp364 each contribute to the substrate site. Mg(2+) is bound by residues Asp364 and Glu366. Arg368 is an active-site residue. Lys455 is modified (N6-acetyllysine; alternate). The residue at position 455 (Lys455) is an N6-succinyllysine; alternate. Position 476 is an N6-succinyllysine (Lys476). N6-acetyllysine; alternate is present on Lys489. The residue at position 489 (Lys489) is an N6-succinyllysine; alternate.

It belongs to the peptidase M17 family. Homohexamer. Requires Zn(2+) as cofactor. It depends on Mn(2+) as a cofactor.

The protein resides in the cytoplasm. The enzyme catalyses Release of an N-terminal amino acid, Xaa-|-Yaa-, in which Xaa is preferably Leu, but may be other amino acids including Pro although not Arg or Lys, and Yaa may be Pro. Amino acid amides and methyl esters are also readily hydrolyzed, but rates on arylamides are exceedingly low.. The catalysed reaction is an S-substituted L-cysteinylglycine + H2O = an S-substituted L-cysteine + glycine. It catalyses the reaction L-cysteinylglycine + H2O = L-cysteine + glycine. It carries out the reaction S-benzyl-L-cysteinylglycine + H2O = S-benzyl-L-cysteine + glycine. The enzyme catalyses Release of N-terminal proline from a peptide.. Cytosolic metallopeptidase that catalyzes the removal of unsubstituted N-terminal hydrophobic amino acids from various peptides. The presence of Zn(2+) ions is essential for the peptidase activity, and the association with other cofactors can modulate the substrate spectificity of the enzyme. For instance, in the presence of Mn(2+), it displays a specific Cys-Gly hydrolyzing activity of Cys-Gly-S-conjugates. Involved in the metabolism of glutathione and in the degradation of glutathione S-conjugates, which may play a role in the control of the cell redox status. This chain is Cytosol aminopeptidase, found in Homo sapiens (Human).